A 466-amino-acid polypeptide reads, in one-letter code: Glucose-6-phosphate 1-dehydrogenase 1 (466 aa).

NADP(+)-binding positions include S48, 88 to 89 (DV), and K141. Residues H171, K175, E209, and D228 each contribute to the substrate site. H233 (proton acceptor) is an active-site residue. K319 and K324 together coordinate substrate.

It belongs to the glucose-6-phosphate dehydrogenase family.

It catalyses the reaction D-glucose 6-phosphate + NADP(+) = 6-phospho-D-glucono-1,5-lactone + NADPH + H(+). It functions in the pathway carbohydrate degradation; pentose phosphate pathway; D-ribulose 5-phosphate from D-glucose 6-phosphate (oxidative stage): step 1/3. Functionally, catalyzes the oxidation of glucose 6-phosphate to 6-phosphogluconolactone. This is Glucose-6-phosphate 1-dehydrogenase 1 from Mycobacterium tuberculosis (strain ATCC 25618 / H37Rv).